The primary structure comprises 220 residues: Metalloproteinase inhibitor 2 (220 aa).

An N-terminal signal peptide occupies residues 1 to 26 (MGAAARSLRLALGLLLLATLPRPADA). Cys27 is a binding site for Zn(2+). Involved in metalloproteinase-binding stretches follow at residues 27 to 30 (CSCS) and 95 to 96 (SA). Intrachain disulfides connect Cys27-Cys98, Cys29-Cys127, Cys39-Cys152, Cys154-Cys201, Cys159-Cys164, and Cys172-Cys193. An NTR domain is found at 27 to 152 (CSCSPVHPQQ…SLNHRYQMGC (126 aa)).

Belongs to the protease inhibitor I35 (TIMP) family. Interacts (via the C-terminal) with MMP2 (via the C-terminal PEX domain); the interaction inhibits the MMP2 activity. In terms of processing, the activity of TIMP2 is dependent on the presence of disulfide bonds.

It localises to the secreted. Its function is as follows. Complexes with metalloproteinases (such as collagenases) and irreversibly inactivates them by binding to their catalytic zinc cofactor. This Canis lupus familiaris (Dog) protein is Metalloproteinase inhibitor 2 (TIMP2).